The following is a 285-amino-acid chain: Nucleotide-binding protein Psyr_4150 (285 aa).

8–15 (GRSGSGKS) serves as a coordination point for ATP. Residue 60–63 (DARN) coordinates GTP.

The protein belongs to the RapZ-like family.

Functionally, displays ATPase and GTPase activities. This Pseudomonas syringae pv. syringae (strain B728a) protein is Nucleotide-binding protein Psyr_4150.